The chain runs to 1033 residues: Integrin alpha-IIb (1033 aa).

An N-terminal signal peptide occupies residues 1–31 (MARASCAWHSLWLLQWTPLFLGPSAVPPVWA). Residues 32–988 (LNLDSEKFSV…TQLLRALEER (957 aa)) lie on the Extracellular side of the membrane. FG-GAP repeat units follow at residues 35 to 96 (DSEK…GGKC), 109 to 173 (NLGF…GRAE), 184 to 237 (SVYA…ISSY), 252 to 304 (TYDN…DSYY), 305 to 370 (QPLH…PQAL), 372 to 431 (TPTL…GLSP), and 434 to 495 (SQVL…VQDS). 2 N-linked (GlcNAc...) asparagine glycosylation sites follow: Asn-46 and Asn-75. Intrachain disulfides connect Cys-87–Cys-96, Cys-138–Cys-161, and Cys-177–Cys-197. Glu-273, Asp-275, Asp-277, Thr-280, Glu-282, Asp-327, Asn-329, Asp-331, Arg-333, Asp-335, Asp-395, Asp-399, Tyr-401, Asp-403, Asp-456, Asp-458, Asn-460, Tyr-462, and Asp-464 together coordinate Ca(2+). 2 disulfides stabilise this stretch: Cys-503-Cys-514 and Cys-520-Cys-575. An N-linked (GlcNAc...) asparagine glycan is attached at Asn-600. 4 disulfide bridges follow: Cys-632-Cys-638, Cys-704-Cys-717, Cys-856-Cys-916, and Cys-905-Cys-911. A glycan (N-linked (GlcNAc...) asparagine) is linked at Asn-710. Residue Asn-957 is glycosylated (N-linked (GlcNAc...) asparagine). Residues 989-1014 (AIPVWWVLVGVLGGLLLLTLLVLAMW) traverse the membrane as a helical segment. The Cytoplasmic segment spans residues 1015 to 1033 (KAGFFKRNRPPLEEDEEEE). Residues 1017–1021 (GFFKR) carry the GFFKR motif motif.

It belongs to the integrin alpha chain family. As to quaternary structure, heterodimer of an alpha and a beta subunit. The alpha subunit is composed of a heavy and a light chain linked by a disulfide bond. Alpha-IIb associates with beta-3. Directly interacts with RNF181. Interacts (via C-terminus cytoplasmic tail region) with CIB1; the interaction is direct and calcium-dependent. Interacts (via C-terminus cytoplasmic tail region) with CIB2, CIB3 and CIB4; the interactions are stabilized/increased in a calcium and magnesium-dependent manner. ITGA2B:ITGB3 interacts with PPIA/CYPA; the interaction is ROS and PPIase activity-dependent and is increased in the presence of thrombin. ITGA2B:ITGB3 interacts with SELP (via C-type lectin domain); the interaction mediates cell-cell interaction and adhesion. Cleaved by ELANE; the cleavage promotes activation of platelet fibrinogen receptor integrin alpha-IIb/beta-3.

The protein localises to the membrane. Functionally, integrin alpha-IIb/beta-3 is a receptor for fibronectin, fibrinogen, plasminogen, prothrombin, thrombospondin and vitronectin. It recognizes the sequence R-G-D in a wide array of ligands. It recognizes the sequence H-H-L-G-G-G-A-K-Q-A-G-D-V in fibrinogen gamma chain. Following activation integrin alpha-IIb/beta-3 brings about platelet/platelet interaction through binding of soluble fibrinogen. This step leads to rapid platelet aggregation which physically plugs ruptured endothelial cell surface. In Mus musculus (Mouse), this protein is Integrin alpha-IIb (Itga2b).